The primary structure comprises 554 residues: CTP synthase (554 aa).

The interval 1–265 is amidoligase domain; that stretch reads MTPLIFVTGG…DELVIDQFKL (265 aa). S13 is a binding site for CTP. S13 serves as a coordination point for UTP. Residues 14–19 and D71 each bind ATP; that span reads SLGKGI. Mg(2+)-binding residues include D71 and E139. Residues 146–148, 186–191, and K222 each bind CTP; these read DIE and KTKPTQ. UTP-binding positions include 186-191 and K222; that span reads KTKPTQ. Positions 292–545 constitute a Glutamine amidotransferase type-1 domain; sequence TIAVVGKYVD…VRAAREKKAG (254 aa). G353 contributes to the L-glutamine binding site. C380 serves as the catalytic Nucleophile; for glutamine hydrolysis. Residues 381–384, E404, and R471 each bind L-glutamine; that span reads YGMQ. Active-site residues include H518 and E520.

The protein belongs to the CTP synthase family. In terms of assembly, homotetramer.

The catalysed reaction is UTP + L-glutamine + ATP + H2O = CTP + L-glutamate + ADP + phosphate + 2 H(+). It catalyses the reaction L-glutamine + H2O = L-glutamate + NH4(+). The enzyme catalyses UTP + NH4(+) + ATP = CTP + ADP + phosphate + 2 H(+). It participates in pyrimidine metabolism; CTP biosynthesis via de novo pathway; CTP from UDP: step 2/2. Allosterically activated by GTP, when glutamine is the substrate; GTP has no effect on the reaction when ammonia is the substrate. The allosteric effector GTP functions by stabilizing the protein conformation that binds the tetrahedral intermediate(s) formed during glutamine hydrolysis. Inhibited by the product CTP, via allosteric rather than competitive inhibition. Catalyzes the ATP-dependent amination of UTP to CTP with either L-glutamine or ammonia as the source of nitrogen. Regulates intracellular CTP levels through interactions with the four ribonucleotide triphosphates. This Xanthomonas campestris pv. campestris (strain B100) protein is CTP synthase.